The primary structure comprises 455 residues: ATP-dependent protease ATPase subunit HslU (455 aa).

ATP contacts are provided by residues V23, 65-70 (GVGKTE), D266, E333, and R405.

This sequence belongs to the ClpX chaperone family. HslU subfamily. As to quaternary structure, a double ring-shaped homohexamer of HslV is capped on each side by a ring-shaped HslU homohexamer. The assembly of the HslU/HslV complex is dependent on binding of ATP.

The protein localises to the cytoplasm. In terms of biological role, ATPase subunit of a proteasome-like degradation complex; this subunit has chaperone activity. The binding of ATP and its subsequent hydrolysis by HslU are essential for unfolding of protein substrates subsequently hydrolyzed by HslV. HslU recognizes the N-terminal part of its protein substrates and unfolds these before they are guided to HslV for hydrolysis. The chain is ATP-dependent protease ATPase subunit HslU from Xanthomonas oryzae pv. oryzae (strain MAFF 311018).